The following is a 317-amino-acid chain: Large ribosomal subunit protein uL10 (317 aa).

Tyrosine 24 is subject to Phosphotyrosine. Threonine 59 is subject to Phosphothreonine. Lysine 264 is covalently cross-linked (Glycyl lysine isopeptide (Lys-Gly) (interchain with G-Cter in ubiquitin)). Residues 294-317 are disordered; it reads APAKVEAKEESEESDEDMGFGLFD. Lysine 297 participates in a covalent cross-link: Glycyl lysine isopeptide (Lys-Gly) (interchain with G-Cter in SUMO1); alternate. Lysine 297 is covalently cross-linked (Glycyl lysine isopeptide (Lys-Gly) (interchain with G-Cter in SUMO2); alternate). Residues 302-311 are compositionally biased toward acidic residues; the sequence is EESEESDEDM. A phosphoserine mark is found at serine 304 and serine 307.

Belongs to the universal ribosomal protein uL10 family. P0 forms a pentameric complex by interaction with dimers of P1 and P2. Identified in a IGF2BP1-dependent mRNP granule complex containing untranslated mRNAs. Interacts with APEX1. Interacts with FMR1 isoform 6. In terms of processing, ubiquitinated at Lys-264 by RNF14 and RNF25 in response to ribosome collisions (ribosome stalling).

It localises to the nucleus. The protein resides in the cytoplasm. Its function is as follows. Ribosomal protein P0 is the functional equivalent of E.coli protein L10. This Homo sapiens (Human) protein is Large ribosomal subunit protein uL10 (RPLP0).